Here is a 66-residue protein sequence, read N- to C-terminus: Large ribosomal subunit protein bL33c (66 aa).

It belongs to the bacterial ribosomal protein bL33 family.

It localises to the plastid. Its subcellular location is the chloroplast. This chain is Large ribosomal subunit protein bL33c, found in Acorus calamus (Sweet flag).